A 201-amino-acid chain; its full sequence is Anthranilate synthase component 2 (201 aa).

The 199-residue stretch at 1–199 folds into the Glutamine amidotransferase type-1 domain; the sequence is MLLMIDNYDS…LRQQGGVRGE (199 aa). 52-54 provides a ligand contact to L-glutamine; it reads GPC. C79 acts as the Nucleophile; for GATase activity in catalysis. L-glutamine is bound by residues Q83 and 129–130; that span reads SL. Active-site for GATase activity residues include H173 and E175.

In terms of assembly, heterotetramer consisting of two non-identical subunits: a beta subunit (TrpG) and a large alpha subunit (TrpE).

It catalyses the reaction chorismate + L-glutamine = anthranilate + pyruvate + L-glutamate + H(+). The protein operates within amino-acid biosynthesis; L-tryptophan biosynthesis; L-tryptophan from chorismate: step 1/5. In terms of biological role, part of a heterotetrameric complex that catalyzes the two-step biosynthesis of anthranilate, an intermediate in the biosynthesis of L-tryptophan. In the first step, the glutamine-binding beta subunit (TrpG) of anthranilate synthase (AS) provides the glutamine amidotransferase activity which generates ammonia as a substrate that, along with chorismate, is used in the second step, catalyzed by the large alpha subunit of AS (TrpE) to produce anthranilate. In the absence of TrpG, TrpE can synthesize anthranilate directly from chorismate and high concentrations of ammonia. In Pseudomonas aeruginosa (strain ATCC 15692 / DSM 22644 / CIP 104116 / JCM 14847 / LMG 12228 / 1C / PRS 101 / PAO1), this protein is Anthranilate synthase component 2.